Here is a 1252-residue protein sequence, read N- to C-terminus: ATP-dependent helicase/nuclease subunit A (1252 aa).

The UvrD-like helicase ATP-binding domain occupies 6–489 (TNWTEEQKEA…VLLYKNFRSR (484 aa)). 27–34 (AAAGSGKT) lines the ATP pocket. Residues 523–811 (ANYEEIEENL…RIMSIHKSKG (289 aa)) enclose the UvrD-like helicase C-terminal domain.

The protein belongs to the helicase family. AddA subfamily. Heterodimer of AddA and AddB/RexB. Requires Mg(2+) as cofactor.

It carries out the reaction Couples ATP hydrolysis with the unwinding of duplex DNA by translocating in the 3'-5' direction.. It catalyses the reaction ATP + H2O = ADP + phosphate + H(+). The heterodimer acts as both an ATP-dependent DNA helicase and an ATP-dependent, dual-direction single-stranded exonuclease. Recognizes the chi site generating a DNA molecule suitable for the initiation of homologous recombination. The AddA nuclease domain is required for chi fragment generation; this subunit has the helicase and 3' -&gt; 5' nuclease activities. This chain is ATP-dependent helicase/nuclease subunit A, found in Clostridium acetobutylicum (strain ATCC 824 / DSM 792 / JCM 1419 / IAM 19013 / LMG 5710 / NBRC 13948 / NRRL B-527 / VKM B-1787 / 2291 / W).